Reading from the N-terminus, the 236-residue chain is Glucosamine-6-phosphate deaminase (236 aa).

D67 (proton acceptor; for enolization step) is an active-site residue. Residue N136 is the For ring-opening step of the active site. The active-site Proton acceptor; for ring-opening step is H138. E143 functions as the For ring-opening step in the catalytic mechanism.

This sequence belongs to the glucosamine/galactosamine-6-phosphate isomerase family. NagB subfamily.

It catalyses the reaction alpha-D-glucosamine 6-phosphate + H2O = beta-D-fructose 6-phosphate + NH4(+). It functions in the pathway amino-sugar metabolism; N-acetylneuraminate degradation; D-fructose 6-phosphate from N-acetylneuraminate: step 5/5. Its function is as follows. Catalyzes the reversible isomerization-deamination of glucosamine 6-phosphate (GlcN6P) to form fructose 6-phosphate (Fru6P) and ammonium ion. The sequence is that of Glucosamine-6-phosphate deaminase from Lachnoclostridium phytofermentans (strain ATCC 700394 / DSM 18823 / ISDg) (Clostridium phytofermentans).